The chain runs to 555 residues: MATAGAAATDLEVVRGKRAALFFAAVAILLGLPLWWKTTETYRAPLPYSEISGLNALQLRLMVPVTVVFTRDSVPLDDQEKLPFTVVHEREIPLKYKMKIKCRFQKAYRRALEHEEEALSLGSVHEAEALLAEPEKQAEGSLTVYVISEHSSLLPQDMMSYIGPERTAIVRGMIHREAFNIIGRRIIHVAQAMSLTEDVLAAALADHLPEDKWSSDKRRPLKSSLGYEITFSLLNPDPKSHDVHWDIEEGVQRYVQPFLNRLSAAGNFSVDSQILYYAMLGVNPRFDPASSSYSLAMHSLPHVINPVESRLGSSAASLYPVLNFLLYVPELAHSPLYIQDKDGAPVATNAFHSPRWGGIMVYNVDPKIYNASELPVRVEVDMAQVMEVFLAQLRLLFGIAQPQVPPKCLLSGPKSEGLMTWELDRLLWARSVENLATATTTLTSLAQLLGKISNIVIKDDVASEVYRAVAAVQKAAEALALGHLSSAFAASQEAVTSSERAFFDPSLLHLLYFPDDQKFAIYIPLFLPMAVPILLSLVKIFLETHKSWKKPEKID.

The Cytoplasmic portion of the chain corresponds to 2 to 18; the sequence is ATAGAAATDLEVVRGKR. A cardiolipin is bound by residues R15 and R18. A helical transmembrane segment spans residues 19-39; that stretch reads AALFFAAVAILLGLPLWWKTT. The Lumenal portion of the chain corresponds to 40-517; it reads ETYRAPLPYS…LHLLYFPDDQ (478 aa). N267 and N370 each carry an N-linked (GlcNAc...) asparagine glycan. The helical transmembrane segment at 518-532 threads the bilayer; it reads KFAIYIPLFLPMAVP. Topologically, residues 533–555 are cytoplasmic; sequence ILLSLVKIFLETHKSWKKPEKID.

The protein belongs to the PIGS family. As to quaternary structure, heteropentamer. Part of the GPI-anchor transamidase complex, consisting of PIGK, PIGT, PIGS, PIGU and GAA1.

The protein resides in the endoplasmic reticulum membrane. The protein operates within glycolipid biosynthesis; glycosylphosphatidylinositol-anchor biosynthesis. Functionally, component of the glycosylphosphatidylinositol-anchor (GPI-anchor) transamidase (GPI-T) complex that catalyzes the formation of the linkage between a proprotein and a GPI-anchor and participates in GPI anchored protein biosynthesis. This chain is GPI-anchor transamidase component PIGS, found in Rattus norvegicus (Rat).